The sequence spans 323 residues: Methionyl-tRNA formyltransferase (323 aa).

Residue 118 to 121 participates in (6S)-5,6,7,8-tetrahydrofolate binding; that stretch reads SLLP.

The protein belongs to the Fmt family.

The enzyme catalyses L-methionyl-tRNA(fMet) + (6R)-10-formyltetrahydrofolate = N-formyl-L-methionyl-tRNA(fMet) + (6S)-5,6,7,8-tetrahydrofolate + H(+). Attaches a formyl group to the free amino group of methionyl-tRNA(fMet). The formyl group appears to play a dual role in the initiator identity of N-formylmethionyl-tRNA by promoting its recognition by IF2 and preventing the misappropriation of this tRNA by the elongation apparatus. The polypeptide is Methionyl-tRNA formyltransferase (Buchnera aphidicola subsp. Baizongia pistaciae (strain Bp)).